A 1058-amino-acid chain; its full sequence is Carbamoyl phosphate synthase large chain (1058 aa).

Positions 1–401 (MPKRKDIQKI…SLLKACRSLE (401 aa)) are carboxyphosphate synthetic domain. Arg-129, Arg-169, Gly-175, Gly-176, Arg-208, Ile-210, Glu-215, Gly-241, Ile-242, His-243, Gln-284, and Glu-298 together coordinate ATP. The 195-residue stretch at 133-327 (KQLMQELDQP…IAKLAAKIAV (195 aa)) folds into the ATP-grasp 1 domain. Residues Gln-284, Glu-298, and Asn-300 each contribute to the Mg(2+) site. 3 residues coordinate Mn(2+): Gln-284, Glu-298, and Asn-300. An oligomerization domain region spans residues 402 to 546 (IGVCHNEMTS…YSTYELENES (145 aa)). Residues 547–929 (VQSNKESILV…ALYKAFEANN (383 aa)) are carbamoyl phosphate synthetic domain. The region spanning 671 to 861 (EKALKELGIP…MAQIATKLIL (191 aa)) is the ATP-grasp 2 domain. The ATP site is built by Arg-707, Ser-746, Ile-748, Glu-752, Gly-777, Val-778, His-779, Ser-780, Gln-820, and Glu-832. Residues Gln-820, Glu-832, and Asn-834 each contribute to the Mg(2+) site. Gln-820, Glu-832, and Asn-834 together coordinate Mn(2+). One can recognise an MGS-like domain in the interval 930 to 1058 (SHLSEFGQIV…ESRCFNIEAI (129 aa)). The interval 930–1058 (SHLSEFGQIV…ESRCFNIEAI (129 aa)) is allosteric domain.

Belongs to the CarB family. As to quaternary structure, composed of two chains; the small (or glutamine) chain promotes the hydrolysis of glutamine to ammonia, which is used by the large (or ammonia) chain to synthesize carbamoyl phosphate. Tetramer of heterodimers (alpha,beta)4. Mg(2+) serves as cofactor. The cofactor is Mn(2+).

The enzyme catalyses hydrogencarbonate + L-glutamine + 2 ATP + H2O = carbamoyl phosphate + L-glutamate + 2 ADP + phosphate + 2 H(+). It catalyses the reaction hydrogencarbonate + NH4(+) + 2 ATP = carbamoyl phosphate + 2 ADP + phosphate + 2 H(+). Its pathway is amino-acid biosynthesis; L-arginine biosynthesis; carbamoyl phosphate from bicarbonate: step 1/1. The protein operates within pyrimidine metabolism; UMP biosynthesis via de novo pathway; (S)-dihydroorotate from bicarbonate: step 1/3. Large subunit of the glutamine-dependent carbamoyl phosphate synthetase (CPSase). CPSase catalyzes the formation of carbamoyl phosphate from the ammonia moiety of glutamine, carbonate, and phosphate donated by ATP, constituting the first step of 2 biosynthetic pathways, one leading to arginine and/or urea and the other to pyrimidine nucleotides. The large subunit (synthetase) binds the substrates ammonia (free or transferred from glutamine from the small subunit), hydrogencarbonate and ATP and carries out an ATP-coupled ligase reaction, activating hydrogencarbonate by forming carboxy phosphate which reacts with ammonia to form carbamoyl phosphate. The protein is Carbamoyl phosphate synthase large chain of Streptococcus pyogenes serotype M3 (strain SSI-1).